A 441-amino-acid polypeptide reads, in one-letter code: MMKNILLYKVLARYTSTKAARFVPKTGVYPKGYEVGGIHCGVKKDGKTFDLAILHNTHGKDASAAAVFTTNKFKAAPVQVSQKLIKETKGAGINSIVVNSGNANAVTGAQGMKDAEDMVIVTDSVLENKPNSTLVMSTGVIGNNLPIDNILSGIPKLALSHLGNSHQNWIDCATAICTTDTFPKLVSKQFTIGKDTYTLAGLCKGAGMICPNMATLLGFFVTDAPVSPSALQLILKYAVDRSFNSITVDGDMSTNDTIAAIANGAAGGELIDLNSSCAERYAELQKEITDFAQQLAQLVVRDGEGATKFITIKVKDALSYKDAKSIASSVANSSLFKTAMYGKDANWGRILCAIGYADVGNGSVVPQKTSVKFVPVDGSESLQLLQNGEPEKVDEERASEILADEDLVIEIDLGTGGGQGADFWTCDLSHEYVTINGDYRS.

6 residues coordinate substrate: threonine 178, lysine 204, threonine 215, glutamate 304, asparagine 436, and serine 441. Catalysis depends on threonine 215, which acts as the Nucleophile.

Belongs to the ArgJ family. As to quaternary structure, heterodimer of an alpha and a beta chain. In terms of processing, the alpha and beta chains are autoproteolytically processed from a single precursor protein within the mitochondrion.

It is found in the mitochondrion matrix. It catalyses the reaction N(2)-acetyl-L-ornithine + L-glutamate = N-acetyl-L-glutamate + L-ornithine. The catalysed reaction is L-glutamate + acetyl-CoA = N-acetyl-L-glutamate + CoA + H(+). It functions in the pathway amino-acid biosynthesis; L-arginine biosynthesis; L-ornithine and N-acetyl-L-glutamate from L-glutamate and N(2)-acetyl-L-ornithine (cyclic): step 1/1. It participates in amino-acid biosynthesis; L-arginine biosynthesis; N(2)-acetyl-L-ornithine from L-glutamate: step 1/4. Its function is as follows. Catalyzes two activities which are involved in the cyclic version of arginine biosynthesis: the synthesis of acetylglutamate from glutamate and acetyl-CoA, and of ornithine by transacetylation between acetylornithine and glutamate. The protein is Arginine biosynthesis bifunctional protein ArgJ, mitochondrial of Lodderomyces elongisporus (strain ATCC 11503 / CBS 2605 / JCM 1781 / NBRC 1676 / NRRL YB-4239) (Yeast).